The primary structure comprises 237 residues: tRNA1(Val) (adenine(37)-N6)-methyltransferase (237 aa).

It belongs to the methyltransferase superfamily. tRNA (adenine-N(6)-)-methyltransferase family.

The protein localises to the cytoplasm. The enzyme catalyses adenosine(37) in tRNA1(Val) + S-adenosyl-L-methionine = N(6)-methyladenosine(37) in tRNA1(Val) + S-adenosyl-L-homocysteine + H(+). Specifically methylates the adenine in position 37 of tRNA(1)(Val) (anticodon cmo5UAC). The chain is tRNA1(Val) (adenine(37)-N6)-methyltransferase from Pasteurella multocida (strain Pm70).